A 388-amino-acid chain; its full sequence is Pre-mRNA-splicing factor cwf2 (388 aa).

Positions 43 to 63 (VKRKKQPARKQIETRPEYEME) are disordered. The C3H1-type zinc finger occupies 111–138 (NPGSFFCLYFARGMCSEGSKCEYLHRLP). Residues 174–248 (YTLYVGGITP…ECLNVRWATT (75 aa)) enclose the RRM domain. The segment at 331 to 352 (PNKSQSEEGSNDDHKSVTTTES) is disordered.

The protein belongs to the RRM CWC2 family. As to quaternary structure, belongs to the 40S cdc5-associated complex (or cwf complex), a spliceosome sub-complex reminiscent of a late-stage spliceosome composed of the U2, U5 and U6 snRNAs and at least brr2, cdc5, cwf2/prp3, cwf3/syf1, cwf4/syf3, cwf5/ecm2, spp42/cwf6, cwf7/spf27, cwf8, cwf9, cwf10, cwf11, cwf12, prp45/cwf13, cwf14, cwf15, cwf16, cwf17, cwf18, cwf19, cwf20, cwf21, cwf22, cwf23, cwf24, cwf25, cwf26, cyp7/cwf27, cwf28, cwf29/ist3, lea1, msl1, prp5/cwf1, prp10, prp12/sap130, prp17, prp22, sap61, sap62, sap114, sap145, slu7, smb1, smd1, smd3, smf1, smg1 and syf2.

Its subcellular location is the nucleus. Functionally, involved in the first step of pre-mRNA splicing. Required for cell growth and cell cycle control. Plays a role in the levels of the U1, U4, U5 and U6 snRNAs and the maintenance of the U4/U6 snRNA complex. May provide the link between the 'nineteen complex' NTC spliceosome protein complex and the spliceosome through the U6 snRNA. Associates predominantly with U6 snRNAs in assembled active spliceosomes. Binds directly to the internal stem-loop (ISL) domain of the U6 snRNA and to the pre-mRNA intron near the 5' splice site during the activation and catalytic phases of the spliceosome cycle. Involved in pre-mRNA splicing. The sequence is that of Pre-mRNA-splicing factor cwf2 (cwf2) from Schizosaccharomyces pombe (strain 972 / ATCC 24843) (Fission yeast).